Reading from the N-terminus, the 141-residue chain is Large ribosomal subunit protein uL11 (141 aa).

This sequence belongs to the universal ribosomal protein uL11 family. In terms of assembly, part of the ribosomal stalk of the 50S ribosomal subunit. Interacts with L10 and the large rRNA to form the base of the stalk. L10 forms an elongated spine to which L12 dimers bind in a sequential fashion forming a multimeric L10(L12)X complex. Post-translationally, one or more lysine residues are methylated.

Forms part of the ribosomal stalk which helps the ribosome interact with GTP-bound translation factors. This chain is Large ribosomal subunit protein uL11, found in Chlamydia muridarum (strain MoPn / Nigg).